Here is a 110-residue protein sequence, read N- to C-terminus: Multidrug transporter EmrE (110 aa).

4 helical membrane passes run 4–21 (YIYL…TTLM), 34–52 (VGTI…QTLA), 58–80 (IAYA…GFFG), and 87–104 (AIIG…INLL).

This sequence belongs to the drug/metabolite transporter (DMT) superfamily. Small multidrug resistance (SMR) (TC 2.A.7.1) family. In terms of assembly, homodimer. Forms an antiparallel dimeric structure. Also forms dimers of homodimers.

The protein localises to the cell inner membrane. With respect to regulation, substrate identity influences both the ground-state and transition-state energies for the conformational exchange process, emphasizing the coupling between substrate binding and transport. Its function is as follows. Multidrug efflux protein that confers resistance to a wide range of toxic compounds, including ethidium, methyl viologen, acriflavine, tetraphenylphosphonium (TPP(+)), benzalkonium, propidium, dequalinium and the aminoglycoside antibiotics streptomycin and tobramycin. Can also transport the osmoprotectants betaine and choline. The drug efflux is coupled to an influx of protons. Can couple antiport of a drug to either one or two protons, performing both electrogenic and electroneutral transport of a single substrate. Simultaneously binds and cotransports proton and drug. In Escherichia coli (strain K12), this protein is Multidrug transporter EmrE (emrE).